The primary structure comprises 434 residues: MHLGCEKNLVDTEHMMGLLDQGGYSISTNPSEASLVVVNTCSFIQDAREESVRVLVGLAEQDKEIIIAGCLAQHFQEELLQSIPEAKAIIGTGDYQNILNVLQRIEQGEIVNQVSNNPTFVGDEKLPRFRTTGKAVAYLKIAEGCDYSCAFCIIPKLRGMQRSRSIESIVAEANQLAKQGVKELILISQITTNYGLDLYGRPCLADLLRELGDVEIPWIRVHYAYPTGLTSEVIKAFREVPNLLPYLDLPLQHSHPDVLRLMNRPWQLDLNASLLDRIRSELPDAIFRTSLIVGFPGETEEHFNHLVSFVQTQQFDHIGVFTFSSEAGTKAASLANQIPFSVAEARKDKIISIQQPIAELKNQNWIGRTVDVLIEREDKDSAEFVGRCARFSPEVDGFVRLQINNTFTNQLNIGMMTPALITGADLYDLTGQVV.

An MTTase N-terminal domain is found at 1–107; it reads MHLGCEKNLV…ILNVLQRIEQ (107 aa). [4Fe-4S] cluster-binding residues include Cys5, Cys41, Cys70, Cys145, Cys149, and Cys152. Residues 131 to 360 form the Radical SAM core domain; it reads TTGKAVAYLK…ISIQQPIAEL (230 aa). Residues 363–434 enclose the TRAM domain; that stretch reads QNWIGRTVDV…DLYDLTGQVV (72 aa).

Belongs to the methylthiotransferase family. RimO subfamily. It depends on [4Fe-4S] cluster as a cofactor.

It localises to the cytoplasm. It carries out the reaction L-aspartate(89)-[ribosomal protein uS12]-hydrogen + (sulfur carrier)-SH + AH2 + 2 S-adenosyl-L-methionine = 3-methylsulfanyl-L-aspartate(89)-[ribosomal protein uS12]-hydrogen + (sulfur carrier)-H + 5'-deoxyadenosine + L-methionine + A + S-adenosyl-L-homocysteine + 2 H(+). In terms of biological role, catalyzes the methylthiolation of an aspartic acid residue of ribosomal protein uS12. The sequence is that of Ribosomal protein uS12 methylthiotransferase RimO from Prochlorococcus marinus (strain SARG / CCMP1375 / SS120).